The following is a 462-amino-acid chain: Polygalacturonase (462 aa).

The first 22 residues, 1–22, serve as a signal peptide directing secretion; it reads MALTRLLLPISILWFCFYSSHT. Residue asparagine 173 is glycosylated (N-linked (GlcNAc...) asparagine). The Proton donor role is filled by aspartate 278. An intrachain disulfide couples cysteine 280 to cysteine 297. Asparagine 294 carries an N-linked (GlcNAc...) asparagine glycan. Residue histidine 301 is part of the active site. Residue asparagine 358 is glycosylated (N-linked (GlcNAc...) asparagine). Intrachain disulfides connect cysteine 407-cysteine 413 and cysteine 435-cysteine 460.

It belongs to the glycosyl hydrolase 28 family.

It is found in the secreted. The protein resides in the cell wall. The enzyme catalyses (1,4-alpha-D-galacturonosyl)n+m + H2O = (1,4-alpha-D-galacturonosyl)n + (1,4-alpha-D-galacturonosyl)m.. Its function is as follows. Acts in concert with the pectinesterase, in the ripening process. Is involved in cell wall metabolism, specifically in polyuronide degradation. This is Polygalacturonase from Persea americana (Avocado).